The following is a 187-amino-acid chain: Peptidyl-tRNA hydrolase (187 aa).

Residue Tyr-15 participates in tRNA binding. Residue His-20 is the Proton acceptor of the active site. TRNA contacts are provided by Phe-64, Asn-66, and Asn-112.

Belongs to the PTH family. Monomer.

It is found in the cytoplasm. It carries out the reaction an N-acyl-L-alpha-aminoacyl-tRNA + H2O = an N-acyl-L-amino acid + a tRNA + H(+). Hydrolyzes ribosome-free peptidyl-tRNAs (with 1 or more amino acids incorporated), which drop off the ribosome during protein synthesis, or as a result of ribosome stalling. Its function is as follows. Catalyzes the release of premature peptidyl moieties from peptidyl-tRNA molecules trapped in stalled 50S ribosomal subunits, and thus maintains levels of free tRNAs and 50S ribosomes. The polypeptide is Peptidyl-tRNA hydrolase (Bacteroides fragilis (strain ATCC 25285 / DSM 2151 / CCUG 4856 / JCM 11019 / LMG 10263 / NCTC 9343 / Onslow / VPI 2553 / EN-2)).